We begin with the raw amino-acid sequence, 56 residues long: Large ribosomal subunit protein bL32 (56 aa).

Residues 1–29 (MAVQQNKPSRSKRGMRRSHDALTTSSVSV) form a disordered region.

This sequence belongs to the bacterial ribosomal protein bL32 family.

In Pectobacterium atrosepticum (strain SCRI 1043 / ATCC BAA-672) (Erwinia carotovora subsp. atroseptica), this protein is Large ribosomal subunit protein bL32.